Consider the following 393-residue polypeptide: MAKESYKRDKPHVNIGTIGHVDHGKTTLTAAITLVLSKQGLAQERDFGSIDKAPEERERGITISTAHVEYQTDKRHYAHIDCPGHADYIKNMITGAAQMDGAILVVAATDGPMPQTREHILLARQVNVPSLVVFLNKVDIADPELIELVELELRELLSQYDFPGDDIPIIKGSALKAMEGDAEGEKAILELMDAVDAFIPDPVRDVDKPFLMPVEDVFSISGRGTVGTGRIERGRIKLNEEVEIVGLRPTRKSVVTGIEMFQKLLDEGQAGDNAGLLLRGVDKTELERGMVIAKPGTIKPHTKFKAEVYILKKEEGGRHTPFFNGYRPQFYFRTTDVTGSVTLPEGVEMVMPGDNLAIEVELLAPIAMDEGLRFAIREGGRTVGAGSVTKINE.

The region spanning 10 to 203 is the tr-type G domain; that stretch reads KPHVNIGTIG…AVDAFIPDPV (194 aa). A G1 region spans residues 19–26; the sequence is GHVDHGKT. 19 to 26 contributes to the GTP binding site; sequence GHVDHGKT. Residue threonine 26 coordinates Mg(2+). The G2 stretch occupies residues 60-64; the sequence is GITIS. Residues 81–84 are G3; sequence DCPG. GTP is bound by residues 81 to 85 and 136 to 139; these read DCPGH and NKVD. The segment at 136 to 139 is G4; the sequence is NKVD. The interval 173 to 175 is G5; sequence SAL.

It belongs to the TRAFAC class translation factor GTPase superfamily. Classic translation factor GTPase family. EF-Tu/EF-1A subfamily. In terms of assembly, monomer.

The protein resides in the cytoplasm. It catalyses the reaction GTP + H2O = GDP + phosphate + H(+). GTP hydrolase that promotes the GTP-dependent binding of aminoacyl-tRNA to the A-site of ribosomes during protein biosynthesis. The protein is Elongation factor Tu of Chlorobium chlorochromatii (strain CaD3).